The following is a 236-amino-acid chain: Sperm flagellar protein 1 (236 aa).

Residues 7–112 (EEALHQLYLW…VLIPLRQRLE (106 aa)) enclose the Calponin-homology (CH) domain. Residues 115–176 (QRRRKQGAGS…PRPPAYNRAL (62 aa)) are disordered. The tract at residues 183–236 (VLQIAEKEQELLASQETVQVLQMKVRRLEHLLQLKNVRIEDLSRRLQQAERKQR) is essential for homodimerization and microtubule bundling activity.

In terms of assembly, homodimer. Interacts with actin, TJP1, CGN and CDH1. In terms of tissue distribution, expressed in the intestinal epithelial cells (at protein level).

It localises to the cytoplasm. The protein localises to the cell projection. The protein resides in the cilium. Its subcellular location is the flagellum. It is found in the cytoskeleton. It localises to the cilium axoneme. The protein localises to the apical cell membrane. The protein resides in the basolateral cell membrane. Its subcellular location is the stress fiber. It is found in the microvillus. It localises to the lamellipodium. The protein localises to the filopodium. In terms of biological role, microtubule-associated protein involved in the stabilization of microtubules along the axis of migration during radial intercalation. Promotes the establishment and stabilization of an axis of microtubules required for the active migration of cells into the outer epithelium. Microtubule-associated protein that promotes microtubule bundling and stabilizes microtubules against depolymerization in response to cold shock. Essential for ciliary central apparatus formation which requires both its microtubule-binding and bundling activities and for ciliary localization of HYDIN and SPAG6 in ependymal cilia. Binds actin in intestinal epithelial cells (IECs), essential for IECs survival and contributes to formation of filopodia and lamellipodia in migrating IECs. Regulates planar cell polarity signaling pathway and asymmetric microtubule accumulation in ciliated epithelia. This Homo sapiens (Human) protein is Sperm flagellar protein 1 (SPEF1).